Consider the following 324-residue polypeptide: MDSNELPVLAYKDGENSVAPIPAHEQQLPTVTAEPWLEISKQGLQLEGLCFDRQGNLLLCEVFGGTIFHVNLPDKKVTELFKSHKQNPAAVKIHKDGRLFVCYLGDFESTGGIFMVDADGNDAQDIVSDIGTEYCIDDPVFDSKGGFYFTDFRGYSTNLKGGVYYVSPDFKSITPVIQNLAVANGVALSTDEKTLWVTETNANRLHRIDLLEDGVTIAPFGASIPYYFTGHEGPDSCCIDSDDNLYVAMYGQGKVLVFNKKGSPIGQILMPGRDQGHMLRSTHPAFIPGTDQLIICANDIENDGGSWIYTVKAFAKGHQSYQFH.

Residues glutamate 47, serine 109, glycine 111, aspartate 129, threonine 132, tyrosine 134, aspartate 137, asparagine 184, aspartate 235, and serine 236 each contribute to the Ca(2+) site. The Proton donor role is filled by aspartate 235.

This sequence belongs to the SMP-30/CGR1 family. Ca(2+) serves as cofactor.

Its subcellular location is the cytoplasm. Its function is as follows. Exhibits lactonase activity. Acts in cells with perturbed membrane integrity and is possibly related to the membrane homeostasis. This chain is Lactonase drp35 (drp35), found in Staphylococcus saprophyticus subsp. saprophyticus (strain ATCC 15305 / DSM 20229 / NCIMB 8711 / NCTC 7292 / S-41).